Reading from the N-terminus, the 22-residue chain is Oxygen-evolving enhancer protein 2 (22 aa).

Belongs to the PsbP family.

Its subcellular location is the plastid. It is found in the chloroplast thylakoid membrane. Functionally, may be involved in the regulation of photosystem II. In Physcomitrium patens (Spreading-leaved earth moss), this protein is Oxygen-evolving enhancer protein 2.